Reading from the N-terminus, the 512-residue chain is Cytochrome P450 monooxygenase astD (512 aa).

A helical membrane pass occupies residues 19-39; that stretch reads MGISILVMLSTFLALGTIFVY. N-linked (GlcNAc...) asparagine glycans are attached at residues Asn-191 and Asn-413. Residue Cys-449 coordinates heme.

The protein belongs to the cytochrome P450 family. Heme is required as a cofactor.

It is found in the membrane. It participates in secondary metabolite biosynthesis; terpenoid biosynthesis. In terms of biological role, cytochrome P450 monooxygenase; part of the gene cluster that mediates the biosynthesis of astellolides, drimane-type sesquiterpene esters that show antimicrobial, anti-inflammatory, and anti-tumor activities. The first step in astellolide biosynthesis is performed by the sesquiterpene cyclase astC that catalyzes the formation of drimanyl pyrophosphate from farnesyl pyrophosphate. Drimanyl pyrophosphate is then dephosphorylated by the sesquiterpene phosphatase astI to produce drimanyl monophosphate which is further dephosphorylated to drim-8-ene-11-ol by atsK. Drim-8-ene-11-ol is converted to confertifolin, probably by the cytochrome P450 monooxygenase astD and/or the dehydrogenase astE. The cytochrome P450 monooxygenases astB, astF and astJ then hydroxylate confertifolin at C6, C14, or C15 to form trihydroxy confertifolin. The nonribosomal peptide synthetase astA catalyzes ester bond formation between trihydroxy contifolin and benzoic acid (BA) or 4-hydroxy benzoic acid (4HBA), leading to the formation of dideacetyl astellolides A and B, respectively. Finally, the O-acetyltransferase astG converts dideacetyl astellolides A and B into deacetyl astellolides A and B. The sequence is that of Cytochrome P450 monooxygenase astD from Aspergillus oryzae (strain ATCC 42149 / RIB 40) (Yellow koji mold).